Reading from the N-terminus, the 160-residue chain is Large ribosomal subunit protein uL16 (160 aa).

Positions 138-160 (KNLEAPSQEKTKNSKKSQEEVKQ) are disordered.

It belongs to the universal ribosomal protein uL16 family. In terms of assembly, part of the 50S ribosomal subunit.

In terms of biological role, binds 23S rRNA and is also seen to make contacts with the A and possibly P site tRNAs. This Prochlorococcus marinus (strain MIT 9215) protein is Large ribosomal subunit protein uL16.